Here is a 287-residue protein sequence, read N- to C-terminus: ATP synthase gamma chain (287 aa).

Belongs to the ATPase gamma chain family. F-type ATPases have 2 components, CF(1) - the catalytic core - and CF(0) - the membrane proton channel. CF(1) has five subunits: alpha(3), beta(3), gamma(1), delta(1), epsilon(1). CF(0) has three main subunits: a, b and c.

It is found in the cell inner membrane. Its function is as follows. Produces ATP from ADP in the presence of a proton gradient across the membrane. The gamma chain is believed to be important in regulating ATPase activity and the flow of protons through the CF(0) complex. The chain is ATP synthase gamma chain from Xylella fastidiosa (strain M23).